The sequence spans 146 residues: Phospho-2-dehydro-3-deoxyheptonate aldolase (146 aa).

This sequence belongs to the class-II DAHP synthase family. Homodimer.

The catalysed reaction is D-erythrose 4-phosphate + phosphoenolpyruvate + H2O = 7-phospho-2-dehydro-3-deoxy-D-arabino-heptonate + phosphate. Its pathway is metabolic intermediate biosynthesis; chorismate biosynthesis; chorismate from D-erythrose 4-phosphate and phosphoenolpyruvate: step 1/7. This is Phospho-2-dehydro-3-deoxyheptonate aldolase from Streptomyces lividans.